Reading from the N-terminus, the 1651-residue chain is Roundabout homolog 1 (1651 aa).

The signal sequence occupies residues 1–25; it reads MKWKHLPLLVMISLLTLSKKHLLLA. Residues 26–897 are Extracellular-facing; sequence QLIPDPEDLE…QQISDVVKQP (872 aa). Positions 31-66 are disordered; it reads PEDLERGNDNGTPAPTSDNDDNSLGYTGSRLRQEDF. Residues 39–56 show a composition bias toward polar residues; it reads DNGTPAPTSDNDDNSLGY. Ig-like C2-type domains are found at residues 68 to 164, 170 to 257, 262 to 346, 351 to 446, and 455 to 541; these read PRIV…ASLE, DDFR…ADVT, PSFV…ATLT, PHFV…LEVT, and PVIR…AYIE. Residues C89 and C147 are joined by a disulfide bond. The N-linked (GlcNAc...) asparagine glycan is linked to N160. Disulfide bonds link C191/C240, C283/C330, and C372/C428. A glycan (N-linked (GlcNAc...) asparagine) is linked at N463. C476 and C525 form a disulfide bridge. 3 Fibronectin type-III domains span residues 563–657, 676–773, and 778–874; these read APSK…TQDV, VVLH…TLEE, and PPRS…LDSH. N-linked (GlcNAc...) asparagine glycosylation is found at N790, N820, and N827. A helical transmembrane segment spans residues 898 to 918; that stretch reads AFIAGIGAACWIILMVFSIWL. Over 919–1651 the chain is Cytoplasmic; that stretch reads YRHRKKRNGL…NNEELEETES (733 aa). A Phosphoserine modification is found at S940. T948 carries the phosphothreonine modification. Y1038 is subject to Phosphotyrosine. Position 1055 is a phosphoserine (S1055). Y1073 carries the phosphotyrosine modification. The interval 1086 to 1107 is disordered; it reads NMNNGGGDSSEKHWKPPGQQKQ. A Phosphotyrosine modification is found at Y1114. Disordered regions lie at residues 1137 to 1337, 1352 to 1397, and 1420 to 1651; these read PYNH…ADME, EQTP…DGSF, and RRQM…ETES. Residues 1147–1163 show a composition bias toward low complexity; the sequence is GGSYNSSDRGSSTSGSQ. A compositionally biased stretch (pro residues) spans 1186 to 1196; it reads LPPPPAHPPPH. T1240 is modified (phosphothreonine). Residues 1255 to 1269 show a composition bias toward polar residues; it reads YSHQSTATLTPSPQE. Positions 1281–1293 are enriched in basic and acidic residues; the sequence is DLGHMPHPPDRRR. The span at 1296 to 1307 shows a compositional bias: pro residues; it reads VSPPPPPRPISP. S1297 is subject to Phosphoserine. The span at 1322–1336 shows a compositional bias: acidic residues; sequence MDTDAPEEEEDEADM. The segment covering 1384 to 1397 has biased composition (low complexity); the sequence is SSGRSSVSSSDGSF. Residues 1438-1451 show a composition bias toward polar residues; sequence PRPTSPVSTDSNMS. Over residues 1459-1470 the composition is skewed to basic residues; sequence RPTKKQKHQPGH. A compositionally biased stretch (pro residues) spans 1480-1490; it reads LPPPPVPPPAI. Basic and acidic residues-rich tracts occupy residues 1516–1541 and 1549–1573; these read ARADRSSDRKGGSYKGREALDGRQVT and DPREAQEQPNEGKARGTKTAKRDLP. The segment covering 1592 to 1601 has biased composition (polar residues); that stretch reads FPTSNNPRDP. Over residues 1602 to 1614 the composition is skewed to low complexity; it reads SSSSSMSSRGSGS. Positions 1642-1651 are enriched in acidic residues; the sequence is NNEELEETES.

This sequence belongs to the immunoglobulin superfamily. ROBO family. As to quaternary structure, homodimer. Dimerization is mediated by the extracellular domain and is independent of SLIT liganding. Interacts with SLIT1. Interacts with SLIT2. Interacts with FLRT3. Interacts with MYO9B (via Rho-GAP domain). In terms of processing, ubiquitinated. May be deubiquitinated by USP33. Expressed in embryonal brain and spinal cord.

Its subcellular location is the cell membrane. It is found in the cell projection. The protein resides in the axon. It localises to the endoplasmic reticulum-Golgi intermediate compartment membrane. In terms of biological role, receptor for SLIT1 and SLIT2 that mediates cellular responses to molecular guidance cues in cellular migration, including axonal navigation at the ventral midline of the neural tube and projection of axons to different regions during neuronal development. Interaction with the intracellular domain of FLRT3 mediates axon attraction towards cells expressing NTN1. In axon growth cones, the silencing of the attractive effect of NTN1 by SLIT2 may require the formation of a ROBO1-DCC complex. Plays a role in the regulation of cell migration via its interaction with MYO9B; inhibits MYO9B-mediated stimulation of RHOA GTPase activity, and thereby leads to increased levels of active, GTP-bound RHOA. May be required for lung development. The polypeptide is Roundabout homolog 1 (Robo1) (Rattus norvegicus (Rat)).